The following is a 240-amino-acid chain: 4-hydroxy-tetrahydrodipicolinate reductase (240 aa).

NAD(+)-binding positions include 79 to 81 (ATT) and 103 to 106 (SANM). H135 functions as the Proton donor/acceptor in the catalytic mechanism. H136 is a binding site for (S)-2,3,4,5-tetrahydrodipicolinate. The active-site Proton donor is the K139. Position 145–146 (145–146 (GT)) interacts with (S)-2,3,4,5-tetrahydrodipicolinate.

The protein belongs to the DapB family.

The protein localises to the cytoplasm. The enzyme catalyses (S)-2,3,4,5-tetrahydrodipicolinate + NAD(+) + H2O = (2S,4S)-4-hydroxy-2,3,4,5-tetrahydrodipicolinate + NADH + H(+). It carries out the reaction (S)-2,3,4,5-tetrahydrodipicolinate + NADP(+) + H2O = (2S,4S)-4-hydroxy-2,3,4,5-tetrahydrodipicolinate + NADPH + H(+). It functions in the pathway amino-acid biosynthesis; L-lysine biosynthesis via DAP pathway; (S)-tetrahydrodipicolinate from L-aspartate: step 4/4. Functionally, catalyzes the conversion of 4-hydroxy-tetrahydrodipicolinate (HTPA) to tetrahydrodipicolinate. The chain is 4-hydroxy-tetrahydrodipicolinate reductase from Staphylococcus aureus (strain JH1).